The chain runs to 131 residues: Holo-[acyl-carrier-protein] synthase (131 aa).

Mg(2+) contacts are provided by Asp8 and Glu57.

This sequence belongs to the P-Pant transferase superfamily. AcpS family. Requires Mg(2+) as cofactor.

It is found in the cytoplasm. It catalyses the reaction apo-[ACP] + CoA = holo-[ACP] + adenosine 3',5'-bisphosphate + H(+). Functionally, transfers the 4'-phosphopantetheine moiety from coenzyme A to a Ser of acyl-carrier-protein. The chain is Holo-[acyl-carrier-protein] synthase from Desulforudis audaxviator (strain MP104C).